Consider the following 253-residue polypeptide: MIAPSLSSGVEQLGDMIAHASSIVPFTGAGISTESGIPDFRSPGGLWSRNQPIPFDEFVARQDARDEAWRRRFAMEQTFAKARPARGHRALASLYKAGKVPAIITQNIDNLHQVSGFAEHDVVELHGNTTYARCIGCGKRHELDWVREWFFRTGHAPHCTACDEPVKTATVSFGQSMPSDAMRRATELAQHCDLFIAIGSSLVVWPAAGFPMLAKECGAKLVIINREPTEQDEIADLVIRHDIGETLGPFVGN.

The 251-residue stretch at 3–253 (APSLSSGVEQ…GETLGPFVGN (251 aa)) folds into the Deacetylase sirtuin-type domain. NAD(+)-binding residues include Ala29, Thr33, Phe40, Arg41, Gln106, Ile108, Asp109, and His126. Phe40 serves as a coordination point for nicotinamide. Residues Ile108 and Asp109 each coordinate nicotinamide. His126 serves as the catalytic Proton acceptor. Residues Cys134, Cys137, Cys159, and Cys162 each coordinate Zn(2+). NAD(+) contacts are provided by Ser200, Ser201, Asn225, Asp242, and Ile243.

Belongs to the sirtuin family. Class U subfamily. It depends on Zn(2+) as a cofactor.

The protein localises to the cytoplasm. It carries out the reaction N(6)-acetyl-L-lysyl-[protein] + NAD(+) + H2O = 2''-O-acetyl-ADP-D-ribose + nicotinamide + L-lysyl-[protein]. NAD-dependent protein deacetylase which modulates the activities of several enzymes which are inactive in their acetylated form. The sequence is that of NAD-dependent protein deacetylase from Rhodopseudomonas palustris (strain ATCC BAA-98 / CGA009).